Reading from the N-terminus, the 213-residue chain is Uridine kinase (213 aa).

14–21 contacts ATP; sequence GASASGKS.

This sequence belongs to the uridine kinase family.

It localises to the cytoplasm. It carries out the reaction uridine + ATP = UMP + ADP + H(+). The catalysed reaction is cytidine + ATP = CMP + ADP + H(+). The protein operates within pyrimidine metabolism; CTP biosynthesis via salvage pathway; CTP from cytidine: step 1/3. It functions in the pathway pyrimidine metabolism; UMP biosynthesis via salvage pathway; UMP from uridine: step 1/1. The sequence is that of Uridine kinase from Vibrio atlanticus (strain LGP32) (Vibrio splendidus (strain Mel32)).